The sequence spans 175 residues: 3-hydroxydecanoyl-[acyl-carrier-protein] dehydratase (175 aa).

The active site involves His-71.

The protein belongs to the thioester dehydratase family. FabA subfamily. In terms of assembly, homodimer.

It localises to the cytoplasm. The catalysed reaction is a (3R)-hydroxyacyl-[ACP] = a (2E)-enoyl-[ACP] + H2O. It carries out the reaction (3R)-hydroxydecanoyl-[ACP] = (2E)-decenoyl-[ACP] + H2O. The enzyme catalyses (2E)-decenoyl-[ACP] = (3Z)-decenoyl-[ACP]. Its pathway is lipid metabolism; fatty acid biosynthesis. Functionally, necessary for the introduction of cis unsaturation into fatty acids. Catalyzes the dehydration of (3R)-3-hydroxydecanoyl-ACP to E-(2)-decenoyl-ACP and then its isomerization to Z-(3)-decenoyl-ACP. Can catalyze the dehydratase reaction for beta-hydroxyacyl-ACPs with saturated chain lengths up to 16:0, being most active on intermediate chain length. This chain is 3-hydroxydecanoyl-[acyl-carrier-protein] dehydratase, found in Rhodopseudomonas palustris (strain ATCC BAA-98 / CGA009).